Reading from the N-terminus, the 455-residue chain is Adenylyltransferase and sulfurtransferase MOCS3 (455 aa).

ATP is bound by residues G90, D111, 118 to 122 (SNLAR), K135, and 179 to 180 (DN). Residues 156–236 (AQALTPATAL…QPPPAETVTN (81 aa)) are interaction with NFS1. The Zn(2+) site is built by C220 and C223. C237 serves as the catalytic Glycyl thioester intermediate; for adenylyltransferase activity. Zn(2+) contacts are provided by C295 and C298. The cysteines at positions 314 and 322 are disulfide-linked. Residues 345 to 453 (SGSPHLLLDV…WAAKVDGTFP (109 aa)) form the Rhodanese domain. Catalysis depends on C410, which acts as the Cysteine persulfide intermediate; for sulfurtransferase activity. Position 410 is a cysteine persulfide (C410).

This sequence in the N-terminal section; belongs to the HesA/MoeB/ThiF family. UBA4 subfamily. Interacts with NFS1. It depends on Zn(2+) as a cofactor.

It localises to the cytoplasm. The protein localises to the cytosol. The enzyme catalyses [molybdopterin-synthase sulfur-carrier protein]-C-terminal Gly-Gly + ATP + H(+) = [molybdopterin-synthase sulfur-carrier protein]-C-terminal Gly-Gly-AMP + diphosphate. It catalyses the reaction [molybdopterin-synthase sulfur-carrier protein]-C-terminal Gly-Gly-AMP + S-sulfanyl-L-cysteinyl-[cysteine desulfurase] + AH2 = [molybdopterin-synthase sulfur-carrier protein]-C-terminal-Gly-aminoethanethioate + L-cysteinyl-[cysteine desulfurase] + A + AMP + 2 H(+). It functions in the pathway tRNA modification; 5-methoxycarbonylmethyl-2-thiouridine-tRNA biosynthesis. The protein operates within cofactor biosynthesis; molybdopterin biosynthesis. In terms of biological role, plays a central role in 2-thiolation of mcm(5)S(2)U at tRNA wobble positions of cytosolic tRNA(Lys), tRNA(Glu) and tRNA(Gln). Also essential during biosynthesis of the molybdenum cofactor. Acts by mediating the C-terminal thiocarboxylation of sulfur carriers URM1 and MOCS2A. Its N-terminus first activates URM1 and MOCS2A as acyl-adenylates (-COAMP), then the persulfide sulfur on the catalytic cysteine is transferred to URM1 and MOCS2A to form thiocarboxylation (-COSH) of their C-terminus. The reaction probably involves hydrogen sulfide that is generated from the persulfide intermediate and that acts as a nucleophile towards URM1 and MOCS2A. Subsequently, a transient disulfide bond is formed. Does not use thiosulfate as sulfur donor; NFS1 acting as a sulfur donor for thiocarboxylation reactions. The chain is Adenylyltransferase and sulfurtransferase MOCS3 from Sus scrofa (Pig).